A 354-amino-acid polypeptide reads, in one-letter code: MAELKNDRYLRALLKEPVDVTPVWMMRQAGRYLPEYKATRAQAGDFMSLCKNHELACEVTLQPLRRYDLDAAILFSDILTVPDAMGLGLYFEAGEGPRFERPTDTIDAIKKLSIPDPEDELGYVMKAVSTIRRELNGAVPLIGFSGSPWTLATYMVEGGSSKTFEKIKKMAYAEPMALHMLLDKLADSVILYLNAQVANGAQSLMIFDSWGGALSHSAYREFSLRYMQKIIDGLTRFADGRKVPVTLFTKGGGLWLEAMAETGCDALGLDWTVDIADARRRVGHKVALQGNMDPSMLYAPIPRIEEEVGHILAGYGEGTGHVFNLGHGIHQHVDPEHAGAFIKAVHAQSKRYHK.

Residues 27–31, D77, Y154, S209, and H327 contribute to the substrate site; that span reads RQAGR.

This sequence belongs to the uroporphyrinogen decarboxylase family. As to quaternary structure, homodimer.

The protein resides in the cytoplasm. It carries out the reaction uroporphyrinogen III + 4 H(+) = coproporphyrinogen III + 4 CO2. It functions in the pathway porphyrin-containing compound metabolism; protoporphyrin-IX biosynthesis; coproporphyrinogen-III from 5-aminolevulinate: step 4/4. Functionally, catalyzes the decarboxylation of four acetate groups of uroporphyrinogen-III to yield coproporphyrinogen-III. The chain is Uroporphyrinogen decarboxylase from Shewanella baltica (strain OS223).